Consider the following 123-residue polypeptide: Large ribosomal subunit protein uL14 (123 aa).

The protein belongs to the universal ribosomal protein uL14 family. Part of the 50S ribosomal subunit. Forms a cluster with proteins L3 and L19. In the 70S ribosome, L14 and L19 interact and together make contacts with the 16S rRNA in bridges B5 and B8.

In terms of biological role, binds to 23S rRNA. Forms part of two intersubunit bridges in the 70S ribosome. This chain is Large ribosomal subunit protein uL14, found in Blochmanniella floridana.